Reading from the N-terminus, the 107-residue chain is Ferredoxin (107 aa).

4Fe-4S ferredoxin-type domains follow at residues 2-30 (TYVV…YEGE) and 31-60 (FMLV…PETP). The [3Fe-4S] cluster site is built by Cys9 and Cys17. Cys21, Cys40, Cys43, and Cys46 together coordinate [4Fe-4S] cluster. Residue Cys50 participates in [3Fe-4S] cluster binding.

It depends on [4Fe-4S] cluster as a cofactor. The cofactor is [3Fe-4S] cluster.

Functionally, ferredoxins are iron-sulfur proteins that transfer electrons in a wide variety of metabolic reactions. In Rickettsia bellii (strain RML369-C), this protein is Ferredoxin (fdxA).